The sequence spans 87 residues: Colicin-E7 immunity protein (87 aa).

It belongs to the colicins ColE2/ColE8/ColE9 and pyocins S1/S2 family.

This protein is able to protect a cell, which harbors the plasmid ColE7 encoding colicin E7, against colicin E7, it binds specifically to the DNase-type colicin and inhibits its bactericidal activity. Dimeric ImmE7 may possess a RNase activity that cleaves its own mRNA at a specific site and thus autoregulates translational expression of the downstream ceiE7 gene as well as degradation of the upstream ceaE7 mRNA. This chain is Colicin-E7 immunity protein (imm), found in Escherichia coli.